A 500-amino-acid polypeptide reads, in one-letter code: Aspartyl/glutamyl-tRNA(Asn/Gln) amidotransferase subunit B (500 aa).

Belongs to the GatB/GatE family. GatB subfamily. In terms of assembly, heterotrimer of A, B and C subunits.

It carries out the reaction L-glutamyl-tRNA(Gln) + L-glutamine + ATP + H2O = L-glutaminyl-tRNA(Gln) + L-glutamate + ADP + phosphate + H(+). The catalysed reaction is L-aspartyl-tRNA(Asn) + L-glutamine + ATP + H2O = L-asparaginyl-tRNA(Asn) + L-glutamate + ADP + phosphate + 2 H(+). Allows the formation of correctly charged Asn-tRNA(Asn) or Gln-tRNA(Gln) through the transamidation of misacylated Asp-tRNA(Asn) or Glu-tRNA(Gln) in organisms which lack either or both of asparaginyl-tRNA or glutaminyl-tRNA synthetases. The reaction takes place in the presence of glutamine and ATP through an activated phospho-Asp-tRNA(Asn) or phospho-Glu-tRNA(Gln). The chain is Aspartyl/glutamyl-tRNA(Asn/Gln) amidotransferase subunit B from Rhizobium meliloti (strain 1021) (Ensifer meliloti).